Here is a 1026-residue protein sequence, read N- to C-terminus: Retinoblastoma-related protein 1 (1026 aa).

Positions 416-616 (TPVSTAMTTA…EKGSSMYNSL (201 aa)) are domain A. The interval 416-872 (TPVSTAMTTA…NEVFIPSVKP (457 aa)) is pocket. The interval 617–737 (AVARPALSVE…PGGGGETCAE (121 aa)) is spacer. Positions 656–680 (PVPSLPKPEPMSAQNGDPRSPKRPC) are disordered. Residues 738–872 (TGISVFFSKI…NEVFIPSVKP (135 aa)) are domain B. Residues 1007 to 1026 (QNGSSASSSGAPLKSEQPDS) form a disordered region.

The protein belongs to the retinoblastoma protein (RB) family.

The protein resides in the nucleus. Regulator of biological processes that recruits a histone deacetylase to control gene transcription. May play a role in the entry into mitosis, negatively regulating the cell proliferation. Formation of stable complexes with geminiviridae replication-associated proteins may create a cellular environment which favors viral DNA replication. The polypeptide is Retinoblastoma-related protein 1 (RBR1) (Pisum sativum (Garden pea)).